A 296-amino-acid chain; its full sequence is MANLNKRPDWIKVKAPNSTEYYNTKDLIKNLRLNTVCEEAACPNIGECWSKKHTTVMILGSVCTRACRFCNVKTGRPDLLDPYEPQRLAEAVQKLNLKHVVITSVDRDDLEDGGASHFAECISEIRKSSPNTTIEILTPDFLRKEGAAEIIANAKPDVFNHNVETVPSLYKTIRPGARYYNSLSLLHNIKKLSPEIFTKSGMMVGLGEEINEVVQVIDDLREAKVDFLTIGQYLQPTKNHAEVAKYVTPEEFKYLERVAKTKGFLMVSANPLTRSSYHADEDFQKLKENYQQKLVS.

[4Fe-4S] cluster contacts are provided by Cys-37, Cys-42, Cys-48, Cys-63, Cys-67, Cys-70, and Ser-276. One can recognise a Radical SAM core domain in the interval 49–265; the sequence is WSKKHTTVMI…ERVAKTKGFL (217 aa).

This sequence belongs to the radical SAM superfamily. Lipoyl synthase family. The cofactor is [4Fe-4S] cluster.

The protein resides in the cytoplasm. The enzyme catalyses [[Fe-S] cluster scaffold protein carrying a second [4Fe-4S](2+) cluster] + N(6)-octanoyl-L-lysyl-[protein] + 2 oxidized [2Fe-2S]-[ferredoxin] + 2 S-adenosyl-L-methionine + 4 H(+) = [[Fe-S] cluster scaffold protein] + N(6)-[(R)-dihydrolipoyl]-L-lysyl-[protein] + 4 Fe(3+) + 2 hydrogen sulfide + 2 5'-deoxyadenosine + 2 L-methionine + 2 reduced [2Fe-2S]-[ferredoxin]. Its pathway is protein modification; protein lipoylation via endogenous pathway; protein N(6)-(lipoyl)lysine from octanoyl-[acyl-carrier-protein]: step 2/2. Its function is as follows. Catalyzes the radical-mediated insertion of two sulfur atoms into the C-6 and C-8 positions of the octanoyl moiety bound to the lipoyl domains of lipoate-dependent enzymes, thereby converting the octanoylated domains into lipoylated derivatives. The chain is Lipoyl synthase from Rickettsia peacockii (strain Rustic).